A 439-amino-acid polypeptide reads, in one-letter code: Microfibrillar-associated protein 1A (439 aa).

A disordered region spans residues 1-200 (MSVPSALMKQ…SEDEMEPRLK (200 aa)). Residue Ser-2 is modified to N-acetylserine. Basic and acidic residues predominate over residues 23 to 34 (RNEKGEISMEKV). Phosphoserine is present on residues Ser-52 and Ser-53. The span at 61 to 70 (QFIKKAKEQE) shows a compositional bias: basic and acidic residues. Residue Lys-67 forms a Glycyl lysine isopeptide (Lys-Gly) (interchain with G-Cter in SUMO2) linkage. Positions 71 to 81 (AEPEEQEEDSS) are enriched in acidic residues. Residues Ser-94, Ser-116, Ser-118, Ser-132, and Ser-133 each carry the phosphoserine modification. 2 stretches are compositionally biased toward acidic residues: residues 112–122 (VVGESDSEVEG) and 131–144 (DSSEEEEEEIDDEE). Residues 145–163 (IERRRGMMRQRAQERKNEE) show a composition bias toward basic and acidic residues. The span at 178 to 195 (ESESESEYEEYTDSEDEM) shows a compositional bias: acidic residues. Residue Lys-249 forms a Glycyl lysine isopeptide (Lys-Gly) (interchain with G-Cter in SUMO2) linkage. Thr-267 carries the post-translational modification Phosphothreonine. Lys-357 is covalently cross-linked (Glycyl lysine isopeptide (Lys-Gly) (interchain with G-Cter in SUMO2)). Residue Ser-361 is modified to Phosphoserine. Glycyl lysine isopeptide (Lys-Gly) (interchain with G-Cter in SUMO2) cross-links involve residues Lys-371, Lys-381, Lys-415, and Lys-418. At Ser-432 the chain carries Phosphoserine.

This sequence belongs to the MFAP1 family. As to quaternary structure, component of the spliceosome B complex. Interacts with PRPF38A (via N-terminal interaction domain).

The protein localises to the nucleus. Its function is as follows. Involved in pre-mRNA splicing as a component of the spliceosome. The protein is Microfibrillar-associated protein 1A of Mus musculus (Mouse).